The primary structure comprises 434 residues: CC-adding tRNA nucleotidyltransferase (434 aa).

19–22 (GAVR) serves as a coordination point for CTP. Residues aspartate 32 and aspartate 34 each contribute to the Mg(2+) site. CTP is bound by residues 90 to 91 (RD), asparagine 95, 130 to 139 (DHLRSLRGVR), and arginine 175.

It belongs to the tRNA nucleotidyltransferase/poly(A) polymerase family. Requires Mg(2+) as cofactor.

The catalysed reaction is a tRNA precursor + 2 CTP = a tRNA with a 3' CC end + 2 diphosphate. Its function is as follows. tRNA nucleotidyltransferase involved in the synthesis of the tRNA CCA terminus. Adds the two cytidine residues to tRNA. The polypeptide is CC-adding tRNA nucleotidyltransferase (Thermus thermophilus (strain ATCC BAA-163 / DSM 7039 / HB27)).